A 226-amino-acid chain; its full sequence is Glutathione peroxidase 3 (226 aa).

The first 24 residues, 1 to 24 (MARILRASCLLSLLLAGFVPPGRG), serve as a signal peptide directing secretion. Sec-73 is a catalytic residue. Position 73 (Sec-73) is a non-standard amino acid, selenocysteine.

This sequence belongs to the glutathione peroxidase family. As to quaternary structure, homotetramer. As to expression, secreted in plasma.

It is found in the secreted. The catalysed reaction is 2 glutathione + H2O2 = glutathione disulfide + 2 H2O. It carries out the reaction tert-butyl hydroperoxide + 2 glutathione = tert-butanol + glutathione disulfide + H2O. Its function is as follows. Protects cells and enzymes from oxidative damage, by catalyzing the reduction of hydrogen peroxide, lipid peroxides and organic hydroperoxide, by glutathione. This chain is Glutathione peroxidase 3, found in Mus musculus (Mouse).